Here is a 378-residue protein sequence, read N- to C-terminus: Probable tRNA sulfurtransferase (378 aa).

The THUMP domain occupies 51–153 (DANLEKLQYV…SDKTYLFSKT (103 aa)). ATP contacts are provided by residues 171–172 (LM), 196–197 (SF), Arg-253, Gly-275, and Gln-284.

This sequence belongs to the ThiI family.

It localises to the cytoplasm. The enzyme catalyses [ThiI sulfur-carrier protein]-S-sulfanyl-L-cysteine + a uridine in tRNA + 2 reduced [2Fe-2S]-[ferredoxin] + ATP + H(+) = [ThiI sulfur-carrier protein]-L-cysteine + a 4-thiouridine in tRNA + 2 oxidized [2Fe-2S]-[ferredoxin] + AMP + diphosphate. It catalyses the reaction [ThiS sulfur-carrier protein]-C-terminal Gly-Gly-AMP + S-sulfanyl-L-cysteinyl-[cysteine desulfurase] + AH2 = [ThiS sulfur-carrier protein]-C-terminal-Gly-aminoethanethioate + L-cysteinyl-[cysteine desulfurase] + A + AMP + 2 H(+). The protein operates within cofactor biosynthesis; thiamine diphosphate biosynthesis. Functionally, catalyzes the ATP-dependent transfer of a sulfur to tRNA to produce 4-thiouridine in position 8 of tRNAs, which functions as a near-UV photosensor. Also catalyzes the transfer of sulfur to the sulfur carrier protein ThiS, forming ThiS-thiocarboxylate. This is a step in the synthesis of thiazole, in the thiamine biosynthesis pathway. The sulfur is donated as persulfide by IscS. This chain is Probable tRNA sulfurtransferase, found in Mycoplasmopsis agalactiae (strain NCTC 10123 / CIP 59.7 / PG2) (Mycoplasma agalactiae).